The chain runs to 295 residues: GTPase Era (295 aa).

Residues 5–172 (YCGYAAIIGR…EQAVHQLMPE (168 aa)) enclose the Era-type G domain. The interval 13–20 (GRPNVGKS) is G1. 13–20 (GRPNVGKS) contacts GTP. The segment at 39 to 43 (QTTRY) is G2. The tract at residues 60-63 (DTPG) is G3. Residues 60–64 (DTPGL) and 121–124 (NKVD) each bind GTP. Residues 121–124 (NKVD) are G4. Residues 151–153 (LSA) form a G5 region. The KH type-2 domain occupies 203–279 (LGQEIPYSLA…FLQLWVKVKS (77 aa)).

It belongs to the TRAFAC class TrmE-Era-EngA-EngB-Septin-like GTPase superfamily. Era GTPase family. In terms of assembly, monomer.

The protein localises to the cytoplasm. Its subcellular location is the cell inner membrane. Its function is as follows. An essential GTPase that binds both GDP and GTP, with rapid nucleotide exchange. Plays a role in 16S rRNA processing and 30S ribosomal subunit biogenesis and possibly also in cell cycle regulation and energy metabolism. This is GTPase Era from Coxiella burnetii (strain CbuK_Q154) (Coxiella burnetii (strain Q154)).